The sequence spans 181 residues: Early E3 20.3 kDa glycoprotein (181 aa).

N-linked (GlcNAc...) asparagine; by host glycosylation is found at N29, N57, N70, and N75.

It belongs to the adenoviridae E3_20 family.

Its function is as follows. E3 proteins seem to be dispensable for virus growth in tissue culture cells. They are potentially important for virus growth under special conditions; E3 region may help adenoviruses to evade the immune surveillance of the host. The sequence is that of Early E3 20.3 kDa glycoprotein from Homo sapiens (Human).